A 176-amino-acid chain; its full sequence is Superoxide oxidase CybB (176 aa).

The Cytoplasmic segment spans residues 1-7; it reads MENKYSR. The chain crosses the membrane as a helical span at residues 8–29; it reads LQISIHWLVFLLVIAAYCAMEF. Residue His-13 participates in heme b binding. The Periplasmic portion of the chain corresponds to 30-39; sequence RGFFPRSDRP. Residues 40 to 64 traverse the membrane as a helical segment; that stretch reads LINMIHVSCGISILVLMVVRLLLRL. Residue His-45 participates in heme b binding. The Cytoplasmic segment spans residues 65 to 77; it reads KYPTPPIIPKPKP. A helical membrane pass occupies residues 78 to 103; it reads MMTGLAHLGHLVIYLLFIALPVIGLV. At 104–135 the chain is on the periplasmic side; sequence MMYNRGNPWFAFGLTMPYASEANFERVDSLKS. The chain crosses the membrane as a helical span at residues 136–158; sequence WHETLANLGYFVIGLHAAAALAH. The heme b site is built by His-137 and His-151. Residues 159–176 lie on the Cytoplasmic side of the membrane; it reads HYFWKDNTLLRMMPRKRS.

The protein belongs to the cytochrome b561 family. Monomer. Requires heme b as cofactor.

The protein localises to the cell inner membrane. It catalyses the reaction a ubiquinol + 2 O2 = 2 superoxide + a ubiquinone + 2 H(+). The catalysed reaction is a menaquinol + 2 O2 = 2 superoxide + a menaquinone + 2 H(+). Its activity is regulated as follows. Quinone binding to the enzyme accelerates the reaction with superoxide. In terms of biological role, B-type di-heme cytochrome. Catalyzes the oxidation of superoxide to molecular oxygen and transfers the extracted electrons to ubiquinone through the two hemes. Can also use menaquinone. The enzyme may be responsible for the detoxification of the superoxide anion produced in the membrane or at its surface. However, it can also efficiently catalyze the formation of superoxide from ubiquinol under physiological conditions. The chain is Superoxide oxidase CybB from Escherichia coli (strain K12).